A 177-amino-acid polypeptide reads, in one-letter code: Transcription termination/antitermination protein NusG (177 aa).

Residues 126–156 (PGETVRVIDGPFADFNGVVEEVNYEKSRIQV) form the KOW domain.

This sequence belongs to the NusG family.

In terms of biological role, participates in transcription elongation, termination and antitermination. This Pseudomonas aeruginosa (strain ATCC 15692 / DSM 22644 / CIP 104116 / JCM 14847 / LMG 12228 / 1C / PRS 101 / PAO1) protein is Transcription termination/antitermination protein NusG.